A 141-amino-acid chain; its full sequence is ATP synthase epsilon chain (141 aa).

The protein belongs to the ATPase epsilon chain family. In terms of assembly, F-type ATPases have 2 components, CF(1) - the catalytic core - and CF(0) - the membrane proton channel. CF(1) has five subunits: alpha(3), beta(3), gamma(1), delta(1), epsilon(1). CF(0) has three main subunits: a, b and c.

It localises to the cell membrane. In terms of biological role, produces ATP from ADP in the presence of a proton gradient across the membrane. The polypeptide is ATP synthase epsilon chain (Lactococcus lactis subsp. lactis (strain IL1403) (Streptococcus lactis)).